Reading from the N-terminus, the 235-residue chain is MPYPMQLGFQDATSPIMEELMYFHDHTLMIVFLISSLVLYIIILMLTTKLTHTSTMDAQEVETIWTILPAVILILIALPSLRILYMMDEIYNPYLTVKAMGHQWYWSYEFTDYENLMFDSYMIPTKDLSPGQLRLLEVDNRIVLPMELPIRMLISSEDVLHAWTMPSLGLKADAIPGRLNQITLTSSRPGVFYGQCSEICGSNHSFMPIVLEMASLKYFEKWSSMMQSFLSYLYI.

Residues 1–14 lie on the Mitochondrial intermembrane side of the membrane; it reads MPYPMQLGFQDATS. The chain crosses the membrane as a helical span at residues 15 to 45; sequence PIMEELMYFHDHTLMIVFLISSLVLYIIILM. Over 46–59 the chain is Mitochondrial matrix; sequence LTTKLTHTSTMDAQ. The helical transmembrane segment at 60 to 87 threads the bilayer; the sequence is EVETIWTILPAVILILIALPSLRILYMM. The Mitochondrial intermembrane segment spans residues 88-235; the sequence is DEIYNPYLTV…MQSFLSYLYI (148 aa). Cu cation contacts are provided by histidine 161, cysteine 196, glutamate 198, cysteine 200, histidine 204, and methionine 207. A Mg(2+)-binding site is contributed by glutamate 198. A Phosphotyrosine modification is found at tyrosine 218.

It belongs to the cytochrome c oxidase subunit 2 family. In terms of assembly, component of the cytochrome c oxidase (complex IV, CIV), a multisubunit enzyme composed of 14 subunits. The complex is composed of a catalytic core of 3 subunits MT-CO1, MT-CO2 and MT-CO3, encoded in the mitochondrial DNA, and 11 supernumerary subunits COX4I, COX5A, COX5B, COX6A, COX6B, COX6C, COX7A, COX7B, COX7C, COX8 and NDUFA4, which are encoded in the nuclear genome. The complex exists as a monomer or a dimer and forms supercomplexes (SCs) in the inner mitochondrial membrane with NADH-ubiquinone oxidoreductase (complex I, CI) and ubiquinol-cytochrome c oxidoreductase (cytochrome b-c1 complex, complex III, CIII), resulting in different assemblies (supercomplex SCI(1)III(2)IV(1) and megacomplex MCI(2)III(2)IV(2)). Found in a complex with TMEM177, COA6, COX18, COX20, SCO1 and SCO2. Interacts with TMEM177 in a COX20-dependent manner. Interacts with COX20. Interacts with COX16. The cofactor is Cu cation.

The protein localises to the mitochondrion inner membrane. It carries out the reaction 4 Fe(II)-[cytochrome c] + O2 + 8 H(+)(in) = 4 Fe(III)-[cytochrome c] + 2 H2O + 4 H(+)(out). Its function is as follows. Component of the cytochrome c oxidase, the last enzyme in the mitochondrial electron transport chain which drives oxidative phosphorylation. The respiratory chain contains 3 multisubunit complexes succinate dehydrogenase (complex II, CII), ubiquinol-cytochrome c oxidoreductase (cytochrome b-c1 complex, complex III, CIII) and cytochrome c oxidase (complex IV, CIV), that cooperate to transfer electrons derived from NADH and succinate to molecular oxygen, creating an electrochemical gradient over the inner membrane that drives transmembrane transport and the ATP synthase. Cytochrome c oxidase is the component of the respiratory chain that catalyzes the reduction of oxygen to water. Electrons originating from reduced cytochrome c in the intermembrane space (IMS) are transferred via the dinuclear copper A center (CU(A)) of subunit 2 and heme A of subunit 1 to the active site in subunit 1, a binuclear center (BNC) formed by heme A3 and copper B (CU(B)). The BNC reduces molecular oxygen to 2 water molecules using 4 electrons from cytochrome c in the IMS and 4 protons from the mitochondrial matrix. This Didelphis virginiana (North American opossum) protein is Cytochrome c oxidase subunit 2 (MT-CO2).